Here is a 302-residue protein sequence, read N- to C-terminus: Sulfate adenylyltransferase subunit 2 (302 aa).

The disordered stretch occupies residues 280–302 (RQGRAIDHDQSGSMELKKRQGYF).

It belongs to the PAPS reductase family. CysD subfamily. As to quaternary structure, heterodimer composed of CysD, the smaller subunit, and CysN.

It carries out the reaction sulfate + ATP + H(+) = adenosine 5'-phosphosulfate + diphosphate. The protein operates within sulfur metabolism; hydrogen sulfide biosynthesis; sulfite from sulfate: step 1/3. Functionally, with CysN forms the ATP sulfurylase (ATPS) that catalyzes the adenylation of sulfate producing adenosine 5'-phosphosulfate (APS) and diphosphate, the first enzymatic step in sulfur assimilation pathway. APS synthesis involves the formation of a high-energy phosphoric-sulfuric acid anhydride bond driven by GTP hydrolysis by CysN coupled to ATP hydrolysis by CysD. The protein is Sulfate adenylyltransferase subunit 2 of Vibrio cholerae serotype O1 (strain ATCC 39315 / El Tor Inaba N16961).